We begin with the raw amino-acid sequence, 155 residues long: 3-hydroxyacyl-[acyl-carrier-protein] dehydratase FabZ (155 aa).

His-54 is an active-site residue.

It belongs to the thioester dehydratase family. FabZ subfamily.

Its subcellular location is the cytoplasm. It catalyses the reaction a (3R)-hydroxyacyl-[ACP] = a (2E)-enoyl-[ACP] + H2O. Functionally, involved in unsaturated fatty acids biosynthesis. Catalyzes the dehydration of short chain beta-hydroxyacyl-ACPs and long chain saturated and unsaturated beta-hydroxyacyl-ACPs. This Burkholderia ambifaria (strain MC40-6) protein is 3-hydroxyacyl-[acyl-carrier-protein] dehydratase FabZ.